We begin with the raw amino-acid sequence, 2238 residues long: RNA-directed RNA polymerase L (2238 aa).

Residues 26–284 (ITLVTCQNDA…THHSEHPVDC (259 aa)) are endonuclease. Mn(2+) contacts are provided by Glu-51, Asp-89, and Glu-102. Lys-115 is an active-site residue. The 200-residue stretch at 1188 to 1387 (TDMKMCVNLG…FISTKFNKFV (200 aa)) folds into the RdRp catalytic domain. Asp-1346 provides a ligand contact to Mg(2+).

Belongs to the Bunyavirales RNA polymerase family. In terms of assembly, homomultimer; the oligomeric structure is essential for the polymerase activity. Interacts with nucleoprotein N. Interacts with protein Z; this interaction inhibits viral transcription and replication, Z partially blocks the product exit tunnel for the releasing nascent RNA product. Requires Mn(2+) as cofactor. It depends on Mg(2+) as a cofactor.

Its subcellular location is the virion. The protein localises to the host cytoplasm. The catalysed reaction is RNA(n) + a ribonucleoside 5'-triphosphate = RNA(n+1) + diphosphate. In terms of biological role, RNA-dependent RNA polymerase, which is responsible for the replication and transcription of the viral RNA genome using antigenomic RNA as an intermediate. During transcription, synthesizes subgenomic RNAs and assures their capping by a cap-snatching mechanism, which involves the endonuclease activity cleaving the host capped pre-mRNAs. These short capped RNAs are then used as primers for viral transcription. The 3'-end of subgenomic mRNAs molecules are heterogeneous and not polyadenylated. The replicase function is to direct synthesis of antigenomic and genomic RNA which are encapsidated and non capped. As a consequence of the use of the same enzyme for both transcription and replication, these mechanisms need to be well coordinated. These processes may be regulated by proteins N and Z in a dose-dependent manner. Z protein inhibits the viral polymerase L und thus the viral transcription and RNA synthesis. The polypeptide is RNA-directed RNA polymerase L (Calomys callosus (Large vesper mouse)).